The primary structure comprises 565 residues: Ubiquitin carboxyl-terminal hydrolase 21 (565 aa).

Basic and acidic residues predominate over residues 1–14 (MPQASEHRLGRTRE). Disordered stretches follow at residues 1–103 (MPQA…LPLP), 109–128 (ARSK…ALGG), and 142–163 (LALR…LGGF). The span at 42–57 (APGPNPMLRPLPPRPG) shows a compositional bias: pro residues. A compositionally biased stretch (basic and acidic residues) spans 58 to 70 (PPEERLKKLELGR). The segment covering 71 to 82 (GRTSGPRPSGPL) has biased composition (low complexity). Positions 134-152 (ELGAALSRLALRPEPPPLR) match the Nuclear export signal motif. In terms of domain architecture, USP spans 212–558 (VGLRNLGNTC…EGYVLFYQLM (347 aa)). C221 serves as the catalytic Nucleophile. Zn(2+)-binding residues include C384, C387, C437, and C440. The active-site Proton acceptor is H518.

This sequence belongs to the peptidase C19 family. USP21 subfamily. As to quaternary structure, interacts with BEND3.

The protein resides in the cytoplasm. It localises to the nucleus. The enzyme catalyses Thiol-dependent hydrolysis of ester, thioester, amide, peptide and isopeptide bonds formed by the C-terminal Gly of ubiquitin (a 76-residue protein attached to proteins as an intracellular targeting signal).. Functionally, deubiquitinating enzyme that hydrolyzes 'Lys-6'- and 'Lys-11'-linked polyubiquitin. Also hydrolyzes heterotypic (mixed and branched) and homotypic chains. Important regulator of energy metabolism. Glucose and fatty acids trigger its nuclear translocation by CBP-dependent acetylation. In the nucleus, deubiquitinates and stabilizes the nuclear receptor PPARD regulating the expression of various genes involved in glucose and lipid metabolism and oxidative phosphorylation. Also acts as a negative regulator of the ribosome quality control (RQC) by mediating deubiquitination of 40S ribosomal proteins RPS10/eS10 and RPS20/uS10, thereby antagonizing ZNF598-mediated 40S ubiquitination. This is Ubiquitin carboxyl-terminal hydrolase 21 (USP21) from Bos taurus (Bovine).